The chain runs to 370 residues: tRNA-specific 2-thiouridylase MnmA (370 aa).

ATP contacts are provided by residues 10 to 17 (AMSGGVDS) and methionine 36. The active-site Nucleophile is the cysteine 111. The cysteines at positions 111 and 209 are disulfide-linked. Position 135 (glycine 135) interacts with ATP. The interval 159–161 (KDQ) is interaction with tRNA. Cysteine 209 acts as the Cysteine persulfide intermediate in catalysis.

It belongs to the MnmA/TRMU family.

It localises to the cytoplasm. The enzyme catalyses S-sulfanyl-L-cysteinyl-[protein] + uridine(34) in tRNA + AH2 + ATP = 2-thiouridine(34) in tRNA + L-cysteinyl-[protein] + A + AMP + diphosphate + H(+). In terms of biological role, catalyzes the 2-thiolation of uridine at the wobble position (U34) of tRNA, leading to the formation of s(2)U34. In Koribacter versatilis (strain Ellin345), this protein is tRNA-specific 2-thiouridylase MnmA.